The primary structure comprises 610 residues: All-trans-retinol 13,14-reductase (610 aa).

An N-terminal signal peptide occupies residues methionine 1–cysteine 18.

Belongs to the carotenoid/retinoid oxidoreductase family. CrtISO subfamily. It depends on NAD(+) as a cofactor. NADP(+) serves as cofactor. FAD is required as a cofactor.

It localises to the endoplasmic reticulum membrane. It catalyses the reaction all-trans-13,14-dihydroretinol + A = all-trans-retinol + AH2. In terms of biological role, catalyzes the saturation of all-trans-retinol to all-trans-13,14-dihydroretinol. Does not exhibit any activity toward all-trans-retinoic acid, nor 9-cis, 11-cis or 13-cis-retinol isomers. May play a role in the metabolism of vitamin A. Independently of retinol conversion, may regulate liver metabolism upstream of MLXIPL/ChREBP. May play a role in adipocyte differentiation. The protein is All-trans-retinol 13,14-reductase (RETSAT) of Macaca fascicularis (Crab-eating macaque).